The primary structure comprises 504 residues: Maturase K (504 aa).

It belongs to the intron maturase 2 family. MatK subfamily.

The protein localises to the plastid. It is found in the chloroplast. In terms of biological role, usually encoded in the trnK tRNA gene intron. Probably assists in splicing its own and other chloroplast group II introns. The sequence is that of Maturase K from Lepidium campestre (Field pepperwort).